The primary structure comprises 518 residues: Dihydropyrimidinase 2 (518 aa).

The Zn(2+) site is built by H59, H61, and K152. N6-carboxylysine is present on K152. Y157 contacts substrate. 2 residues coordinate Zn(2+): H185 and H241. S291 contributes to the substrate binding site. D319 is a binding site for Zn(2+). N340 provides a ligand contact to substrate.

It belongs to the metallo-dependent hydrolases superfamily. Hydantoinase/dihydropyrimidinase family. In terms of assembly, homotetramer. The cofactor is Zn(2+). In terms of processing, carboxylation allows a single lysine to coordinate two zinc ions.

The enzyme catalyses 5,6-dihydrouracil + H2O = 3-(carbamoylamino)propanoate + H(+). This chain is Dihydropyrimidinase 2 (dhp-2), found in Caenorhabditis briggsae.